The chain runs to 214 residues: UPF0111 protein MJ0629 (214 aa).

It belongs to the UPF0111 family.

This is UPF0111 protein MJ0629 from Methanocaldococcus jannaschii (strain ATCC 43067 / DSM 2661 / JAL-1 / JCM 10045 / NBRC 100440) (Methanococcus jannaschii).